We begin with the raw amino-acid sequence, 60 residues long: U-actitoxin-Avd12b (60 aa).

A signal peptide spans 1 to 6; sequence SKEGMS. Positions 7–12 are excised as a propeptide; sequence YEEPEN. The region spanning 14–56 is the EGF-like domain; the sequence is EGVACTGQYAESFCLNGGTCRYIQSIGEYYCICVGDYTGHRCE. Intrachain disulfides connect C18–C33, C27–C44, and C46–C55.

This sequence belongs to the EGF domain peptide family.

It localises to the secreted. The protein localises to the nematocyst. Functionally, has both toxic and EGF activity. Its EGF activity consists of rounding cells (morphological change) and inducing tyrosine phosphorylation of the EGFR in A431 cells, but with a lower potency that human EGF. The protein is U-actitoxin-Avd12b of Anemonia viridis (Snakelocks anemone).